Consider the following 891-residue polypeptide: Protein translocase subunit SecA 1 (891 aa).

Residues glutamine 86, 104 to 108 (GEGKT), and aspartate 493 each bind ATP. Residues 845–873 (KQVAKPIEASHGDGNRKKAPVVKEKEAGR) are compositionally biased toward basic and acidic residues. Positions 845 to 891 (KQVAKPIEASHGDGNRKKAPVVKEKEAGRNDPCPCGSGKKYKKCCGE) are disordered. Positions 877, 879, 888, and 889 each coordinate Zn(2+).

It belongs to the SecA family. In terms of assembly, monomer and homodimer. Part of the essential Sec protein translocation apparatus which comprises SecA, SecYEG and auxiliary proteins SecDF. Other proteins may also be involved. Zn(2+) is required as a cofactor.

It localises to the cell membrane. Its subcellular location is the cytoplasm. It carries out the reaction ATP + H2O + cellular proteinSide 1 = ADP + phosphate + cellular proteinSide 2.. Its function is as follows. Part of the Sec protein translocase complex. Interacts with the SecYEG preprotein conducting channel. Has a central role in coupling the hydrolysis of ATP to the transfer of proteins into and across the cell membrane, serving as an ATP-driven molecular motor driving the stepwise translocation of polypeptide chains across the membrane. In Alkaliphilus metalliredigens (strain QYMF), this protein is Protein translocase subunit SecA 1.